Reading from the N-terminus, the 304-residue chain is Methionyl-tRNA formyltransferase (304 aa).

110–113 (SLLP) provides a ligand contact to (6S)-5,6,7,8-tetrahydrofolate.

It belongs to the Fmt family.

It carries out the reaction L-methionyl-tRNA(fMet) + (6R)-10-formyltetrahydrofolate = N-formyl-L-methionyl-tRNA(fMet) + (6S)-5,6,7,8-tetrahydrofolate + H(+). Functionally, attaches a formyl group to the free amino group of methionyl-tRNA(fMet). The formyl group appears to play a dual role in the initiator identity of N-formylmethionyl-tRNA by promoting its recognition by IF2 and preventing the misappropriation of this tRNA by the elongation apparatus. This Gluconobacter oxydans (strain 621H) (Gluconobacter suboxydans) protein is Methionyl-tRNA formyltransferase.